We begin with the raw amino-acid sequence, 1204 residues long: ATP-dependent helicase/nuclease subunit A (1204 aa).

One can recognise a UvrD-like helicase ATP-binding domain in the interval Thr2 to Thr469. Ala23–Thr30 contributes to the ATP binding site. One can recognise a UvrD-like helicase C-terminal domain in the interval Glu496–Gly784.

Belongs to the helicase family. AddA subfamily. In terms of assembly, heterodimer of AddA and AddB/RexB. The cofactor is Mg(2+).

The enzyme catalyses Couples ATP hydrolysis with the unwinding of duplex DNA by translocating in the 3'-5' direction.. It carries out the reaction ATP + H2O = ADP + phosphate + H(+). The heterodimer acts as both an ATP-dependent DNA helicase and an ATP-dependent, dual-direction single-stranded exonuclease. Recognizes the chi site generating a DNA molecule suitable for the initiation of homologous recombination. The AddA nuclease domain is required for chi fragment generation; this subunit has the helicase and 3' -&gt; 5' nuclease activities. The polypeptide is ATP-dependent helicase/nuclease subunit A (Lactobacillus johnsonii (strain CNCM I-12250 / La1 / NCC 533)).